A 352-amino-acid polypeptide reads, in one-letter code: Phosphoribosylformylglycinamidine cyclo-ligase (352 aa).

The protein belongs to the AIR synthase family.

The protein resides in the cytoplasm. The enzyme catalyses 2-formamido-N(1)-(5-O-phospho-beta-D-ribosyl)acetamidine + ATP = 5-amino-1-(5-phospho-beta-D-ribosyl)imidazole + ADP + phosphate + H(+). It participates in purine metabolism; IMP biosynthesis via de novo pathway; 5-amino-1-(5-phospho-D-ribosyl)imidazole from N(2)-formyl-N(1)-(5-phospho-D-ribosyl)glycinamide: step 2/2. This Pseudomonas putida (strain W619) protein is Phosphoribosylformylglycinamidine cyclo-ligase.